The sequence spans 392 residues: Formate-dependent phosphoribosylglycinamide formyltransferase (392 aa).

N(1)-(5-phospho-beta-D-ribosyl)glycinamide-binding positions include glutamate 22–leucine 23 and glutamate 82. ATP is bound by residues arginine 114, lysine 155, serine 160–glutamine 165, glutamate 195–valine 198, and glutamate 203. One can recognise an ATP-grasp domain in the interval arginine 119–leucine 308. Residues glutamate 267 and glutamate 279 each contribute to the Mg(2+) site. N(1)-(5-phospho-beta-D-ribosyl)glycinamide-binding positions include aspartate 286, lysine 355, and arginine 362 to arginine 363.

The protein belongs to the PurK/PurT family. As to quaternary structure, homodimer.

The catalysed reaction is N(1)-(5-phospho-beta-D-ribosyl)glycinamide + formate + ATP = N(2)-formyl-N(1)-(5-phospho-beta-D-ribosyl)glycinamide + ADP + phosphate + H(+). It functions in the pathway purine metabolism; IMP biosynthesis via de novo pathway; N(2)-formyl-N(1)-(5-phospho-D-ribosyl)glycinamide from N(1)-(5-phospho-D-ribosyl)glycinamide (formate route): step 1/1. Involved in the de novo purine biosynthesis. Catalyzes the transfer of formate to 5-phospho-ribosyl-glycinamide (GAR), producing 5-phospho-ribosyl-N-formylglycinamide (FGAR). Formate is provided by PurU via hydrolysis of 10-formyl-tetrahydrofolate. The sequence is that of Formate-dependent phosphoribosylglycinamide formyltransferase from Edwardsiella ictaluri (strain 93-146).